The chain runs to 176 residues: NAD(P)H-quinone oxidoreductase subunit 6, chloroplastic (176 aa).

A run of 5 helical transmembrane segments spans residues 10-30 (FILVFLGLVLILGGLAVVLLP), 32-52 (PIYSAFSLGLVLVCISLLYIL), 61-81 (AQLLIYVGAINVLIIFAVMFL), 95-115 (VGDGVTSVVCTSLFASLITTI), and 152-172 (FLIPFELISIILLVALIGAIA).

Belongs to the complex I subunit 6 family. NDH is composed of at least 16 different subunits, 5 of which are encoded in the nucleus.

Its subcellular location is the plastid. The protein localises to the chloroplast thylakoid membrane. It carries out the reaction a plastoquinone + NADH + (n+1) H(+)(in) = a plastoquinol + NAD(+) + n H(+)(out). It catalyses the reaction a plastoquinone + NADPH + (n+1) H(+)(in) = a plastoquinol + NADP(+) + n H(+)(out). Functionally, NDH shuttles electrons from NAD(P)H:plastoquinone, via FMN and iron-sulfur (Fe-S) centers, to quinones in the photosynthetic chain and possibly in a chloroplast respiratory chain. The immediate electron acceptor for the enzyme in this species is believed to be plastoquinone. Couples the redox reaction to proton translocation, and thus conserves the redox energy in a proton gradient. In Trachelium caeruleum (Blue throatwort), this protein is NAD(P)H-quinone oxidoreductase subunit 6, chloroplastic (ndhG).